The chain runs to 500 residues: MSEVEHQELDLNGEMLARREKLAKLREQGNPFPNTFRRDAYAEKLHAQYDEVEGEALKEQDIQVKVAGRIMLKRVMGKASFFTIQDVSGQIQLYVARDNLAEGVYADKVSMWDLGDIVGAAGTLFKTKTGELTVRCSEVELLTKSLRPLPNKVQGLTDQETRYRQRYLDLISNEESRRTFMIRSKMVSGIRQFFLEKDFIEVETPMLQVIPGGAAAKPFITHHNALDVDMYLRIAPELYLKRLVVGGFERVFELNRNFRNEGVSVRHNPEFTMIEYYQAYADYHDLMDNTEELLRKLAIDILGTTTVPYGEYVFDFGKPFERITMHDAIVKYGNGITREDLDSFEKSVEIAKGLGIEIQKSWGLGSVVNAIFEEVAEHQLIQPTFLMAHPAEISPLARRNDENPEVTDRFELFIGGREIGNGFSELNDAEDQAERFDAQVAAKDAGDDEAMFKDEDFVVALEHGLPPTAGEGLGIDRLAMIFANAPSIRDVILFPAMRQK.

Residues Glu411 and Glu418 each coordinate Mg(2+).

This sequence belongs to the class-II aminoacyl-tRNA synthetase family. Homodimer. The cofactor is Mg(2+).

It is found in the cytoplasm. It catalyses the reaction tRNA(Lys) + L-lysine + ATP = L-lysyl-tRNA(Lys) + AMP + diphosphate. This Actinobacillus pleuropneumoniae serotype 7 (strain AP76) protein is Lysine--tRNA ligase.